The following is a 264-amino-acid chain: Dehydrodolichyl diphosphate synthase complex subunit SPAC4D7.04c (264 aa).

This sequence belongs to the UPP synthase family. Forms an active dehydrodolichyl diphosphate synthase complex with nus1. Mg(2+) serves as cofactor.

The protein localises to the endoplasmic reticulum membrane. The catalysed reaction is n isopentenyl diphosphate + (2E,6E)-farnesyl diphosphate = a di-trans,poly-cis-polyprenyl diphosphate + n diphosphate. The protein operates within protein modification; protein glycosylation. Functionally, with nus1, forms the dehydrodolichyl diphosphate synthase (DDS) complex, an essential component of the dolichol monophosphate (Dol-P) biosynthetic machinery. Adds multiple copies of isopentenyl pyrophosphate (IPP) to farnesyl pyrophosphate (FPP) to produce dehydrodolichyl diphosphate (Dedol-PP), a precursor of dolichol which is utilized as a sugar carrier in protein glycosylation in the endoplasmic reticulum (ER). This Schizosaccharomyces pombe (strain 972 / ATCC 24843) (Fission yeast) protein is Dehydrodolichyl diphosphate synthase complex subunit SPAC4D7.04c.